Reading from the N-terminus, the 387-residue chain is Alkanesulfonate monooxygenase (387 aa).

It belongs to the SsuD family.

The catalysed reaction is an alkanesulfonate + FMNH2 + O2 = an aldehyde + FMN + sulfite + H2O + 2 H(+). Functionally, catalyzes the desulfonation of aliphatic sulfonates. The polypeptide is Alkanesulfonate monooxygenase (Cupriavidus necator (strain ATCC 17699 / DSM 428 / KCTC 22496 / NCIMB 10442 / H16 / Stanier 337) (Ralstonia eutropha)).